The sequence spans 83 residues: Exodeoxyribonuclease 7 small subunit (83 aa).

The protein belongs to the XseB family. In terms of assembly, heterooligomer composed of large and small subunits.

The protein resides in the cytoplasm. The enzyme catalyses Exonucleolytic cleavage in either 5'- to 3'- or 3'- to 5'-direction to yield nucleoside 5'-phosphates.. Its function is as follows. Bidirectionally degrades single-stranded DNA into large acid-insoluble oligonucleotides, which are then degraded further into small acid-soluble oligonucleotides. This chain is Exodeoxyribonuclease 7 small subunit, found in Allorhizobium ampelinum (strain ATCC BAA-846 / DSM 112012 / S4) (Agrobacterium vitis (strain S4)).